The following is a 119-amino-acid chain: Small ribosomal subunit protein uS13 (119 aa).

The disordered stretch occupies residues 93–119 (RRGLPLRGQRTRSNARTRKGKRKPIRS).

Belongs to the universal ribosomal protein uS13 family. Part of the 30S ribosomal subunit. Forms a loose heterodimer with protein S19. Forms two bridges to the 50S subunit in the 70S ribosome.

In terms of biological role, located at the top of the head of the 30S subunit, it contacts several helices of the 16S rRNA. In the 70S ribosome it contacts the 23S rRNA (bridge B1a) and protein L5 of the 50S subunit (bridge B1b), connecting the 2 subunits; these bridges are implicated in subunit movement. Contacts the tRNAs in the A and P-sites. The sequence is that of Small ribosomal subunit protein uS13 from Coxiella burnetii (strain RSA 493 / Nine Mile phase I).